We begin with the raw amino-acid sequence, 209 residues long: Putative 3-methyladenine DNA glycosylase (209 aa).

The segment at 189-209 is disordered; that stretch reads YISKTQPGPPPKKRKKGLESS. Residues 199 to 209 are compositionally biased toward basic residues; that stretch reads PKKRKKGLESS.

The protein belongs to the DNA glycosylase MPG family.

The polypeptide is Putative 3-methyladenine DNA glycosylase (Chlorobaculum tepidum (strain ATCC 49652 / DSM 12025 / NBRC 103806 / TLS) (Chlorobium tepidum)).